The sequence spans 490 residues: Protein U94 (490 aa).

The PV NS1-Nuc domain maps to 1–210; sequence MFSIINPSDD…SHFNKKPNVK (210 aa).

It localises to the host nucleus. The polypeptide is Protein U94 (U94) (Human herpesvirus 6A (strain Uganda-1102) (HHV-6 variant A)).